Consider the following 391-residue polypeptide: Phosphoglycerate kinase (391 aa).

Residues 21–23 (DLN), Arg36, 59–62 (HLGR), Arg113, and Arg146 contribute to the substrate site. ATP contacts are provided by residues Lys197, Glu319, and 345 to 348 (GGDT).

The protein belongs to the phosphoglycerate kinase family. In terms of assembly, monomer.

The protein resides in the cytoplasm. It carries out the reaction (2R)-3-phosphoglycerate + ATP = (2R)-3-phospho-glyceroyl phosphate + ADP. It participates in carbohydrate degradation; glycolysis; pyruvate from D-glyceraldehyde 3-phosphate: step 2/5. The sequence is that of Phosphoglycerate kinase from Shewanella piezotolerans (strain WP3 / JCM 13877).